Here is a 594-residue protein sequence, read N- to C-terminus: MHEHLKEKLAILPDQPGCYLMKDRQGTVIYVGKAKVLKNRVRSYFTGSHDGKTLRLVGEIVDFEYIVTSSNLEALILELNLIKKHDPKYNIQLKDDKTYPFIKITAEKQPRLLITRNVKKDKGKYFGPYPNAQSAHETKKLLDRMYPLRKCSNMPDKVCLYYHMGQCLAPCVKEVTEEQNKEIVDEIIKFLNGGHKEVRSELETKMYEASEKLEFERAKELRDQIAHIDAIMEKQKMIMSDLVDRDVFGYAVDKGWMCVQVFFVRKGKLIERDVSMFPIYDEPEEGFLTFIGQFYENSSHFKPKEIVVPGSIDSELVERFLEVEATQPKRGKKKDLVELANKNAKIALEEKFYLIERDEERTIKAVENLGKQLGIETPYRIEAFDNSNIQGTNPVSAMIAFIDGKPAKKEYRKYKIKTVQGPDDYESMREVVRRRYTRALKEGLPLPDLIIIDGGKGHLAAASDVLENELGLYIPMAGLVKDDKHKTSHLIIGDPPEPVMLERNSQEFYLLQRVQDEVHRFAITFHRQLHGKSVIQSALDDIPGIGDKRKKVLLKHFGSLKKMKEASIEEFVEAGMPKNVAETIYTYLTDKKTL.

The 78-residue stretch at 14–91 folds into the GIY-YIG domain; it reads DQPGCYLMKD…IKKHDPKYNI (78 aa). Residues 196-231 form the UVR domain; that stretch reads KEVRSELETKMYEASEKLEFERAKELRDQIAHIDAI.

Belongs to the UvrC family. In terms of assembly, interacts with UvrB in an incision complex.

It localises to the cytoplasm. Its function is as follows. The UvrABC repair system catalyzes the recognition and processing of DNA lesions. UvrC both incises the 5' and 3' sides of the lesion. The N-terminal half is responsible for the 3' incision and the C-terminal half is responsible for the 5' incision. In Bacillus anthracis (strain A0248), this protein is UvrABC system protein C.